Reading from the N-terminus, the 498-residue chain is Glutathione hydrolase 6 (498 aa).

Over 1–49 (MDATTGAVLYQKLQLWEPGMESEEEEEEEEIAEPLVLSLRRLQNTPGNK) the chain is Cytoplasmic. The chain crosses the membrane as a helical; Signal-anchor for type II membrane protein span at residues 50–70 (VGGLPGAWTRLLAGLLLLAVS). The Extracellular portion of the chain corresponds to 71-498 (SSLALRQLQG…PSGCCPFQGY (428 aa)). N-linked (GlcNAc...) asparagine glycans are attached at residues Asn-162, Asn-167, and Asn-376.

This sequence belongs to the gamma-glutamyltransferase family. As to quaternary structure, heterodimer composed of the light and heavy chains. The active site is located in the light chain. Cleaved by autocatalysis into a large and a small subunit and the autocatalytic cleavage is essential to the functional activation of the enzyme.

It is found in the membrane. It carries out the reaction an N-terminal (5-L-glutamyl)-[peptide] + an alpha-amino acid = 5-L-glutamyl amino acid + an N-terminal L-alpha-aminoacyl-[peptide]. It catalyses the reaction glutathione + H2O = L-cysteinylglycine + L-glutamate. The enzyme catalyses an S-substituted glutathione + H2O = an S-substituted L-cysteinylglycine + L-glutamate. The protein operates within sulfur metabolism; glutathione metabolism. Functionally, hydrolyzes and transfers gamma-glutamyl moieties from glutathione and other gamma-glutamyl compounds to acceptors. The polypeptide is Glutathione hydrolase 6 (Rattus norvegicus (Rat)).